Reading from the N-terminus, the 466-residue chain is Acetylornithine aminotransferase, mitochondrial (466 aa).

An N6-(pyridoxal phosphate)lysine modification is found at K308.

The protein belongs to the class-III pyridoxal-phosphate-dependent aminotransferase family. Pyridoxal 5'-phosphate is required as a cofactor.

The protein localises to the mitochondrion matrix. The catalysed reaction is N(2)-acetyl-L-ornithine + 2-oxoglutarate = N-acetyl-L-glutamate 5-semialdehyde + L-glutamate. It participates in amino-acid biosynthesis; L-arginine biosynthesis; N(2)-acetyl-L-ornithine from L-glutamate: step 4/4. The polypeptide is Acetylornithine aminotransferase, mitochondrial (ARG8) (Debaryomyces hansenii (strain ATCC 36239 / CBS 767 / BCRC 21394 / JCM 1990 / NBRC 0083 / IGC 2968) (Yeast)).